Here is a 203-residue protein sequence, read N- to C-terminus: Snake venom metalloproteinase adamalysin-2 (203 aa).

Residues 7–203 (RYIELVVVAD…YKPQCILNKP (197 aa)) enclose the Peptidase M12B domain. Ca(2+) is bound by residues Glu10 and Asp94. 2 cysteine pairs are disulfide-bonded: Cys118/Cys198 and Cys158/Cys165. His143 serves as a coordination point for Zn(2+). The active site involves Glu144. Residues His147 and His153 each contribute to the Zn(2+) site. Ca(2+) is bound by residues Cys198 and Asn201.

It belongs to the venom metalloproteinase (M12B) family. P-I subfamily. Monomer. Requires Zn(2+) as cofactor. As to expression, expressed by the venom gland.

The protein localises to the secreted. It catalyses the reaction Cleavage of 1-Phe-|-Val-2, 5-His-|-Leu-6, 14-Ala-|-Leu-15, 15-Leu-|-Tyr-16, and 16-Tyr-|-Leu-17 of insulin B chain.. In terms of biological role, has no significant hemorrhagic activity, but inactivates serpins by limited proteolysis of their reactive-site loops. The sequence is that of Snake venom metalloproteinase adamalysin-2 from Crotalus adamanteus (Eastern diamondback rattlesnake).